Reading from the N-terminus, the 96-residue chain is Large ribosomal subunit protein uL23 (96 aa).

Belongs to the universal ribosomal protein uL23 family. As to quaternary structure, part of the 50S ribosomal subunit. Contacts protein L29, and trigger factor when it is bound to the ribosome.

In terms of biological role, one of the early assembly proteins it binds 23S rRNA. One of the proteins that surrounds the polypeptide exit tunnel on the outside of the ribosome. Forms the main docking site for trigger factor binding to the ribosome. This Nitratidesulfovibrio vulgaris (strain ATCC 29579 / DSM 644 / CCUG 34227 / NCIMB 8303 / VKM B-1760 / Hildenborough) (Desulfovibrio vulgaris) protein is Large ribosomal subunit protein uL23.